We begin with the raw amino-acid sequence, 354 residues long: MKSLLLLVLISICWADHLSDNYTLDHDRAIHIQAENGPHLLVEAEQAKVFSHRGGNVTLPCKFYRDPTAFGSGIHKIRIKWTKLTSDYLKEVDVFVSMGYHKKTYGGYQGRVFLKGGSDSDASLVITDLTLEDYGRYKCEVIEGLEDDTVVVALDLQGVVFPYFPRLGRYNLNFHEAQQACLDQDAVIASFDQLYDAWRGGLDWCNAGWLSDGSVQYPITKPREPCGGQNTVPGVRNYGFWDKDKSRYDVFCFTSNFNGRFYYLIHPTKLTYDEAVQACLNDGAQIAKVGQIFAAWKILGYDRCDAGWLADGSVRYPISRPRRRCSPTEAAVRFVGFPDKKHKLYGVYCFRAYN.

Positions 1–15 (MKSLLLLVLISICWA) are excised as a propeptide. N21 and N56 each carry an N-linked (GlcNAc...) asparagine glycan. An Ig-like V-type domain is found at 38 to 152 (PHLLVEAEQA…EGLEDDTVVV (115 aa)). 5 cysteine pairs are disulfide-bonded: C61–C139, C181–C252, C205–C226, C279–C349, and C304–C325. Link domains follow at residues 159–254 (VVFP…FCFT) and 259–351 (GRFY…YCFR).

The protein belongs to the HAPLN family. As to expression, widely expressed. Weakly expressed in the brain.

It localises to the secreted. The protein resides in the extracellular space. It is found in the extracellular matrix. Its function is as follows. Stabilizes the aggregates of proteoglycan monomers with hyaluronic acid in the extracellular cartilage matrix. In Homo sapiens (Human), this protein is Hyaluronan and proteoglycan link protein 1 (HAPLN1).